Reading from the N-terminus, the 316-residue chain is Pantothenate kinase (316 aa).

95–102 contributes to the ATP binding site; that stretch reads GSVSVGKS.

The protein belongs to the prokaryotic pantothenate kinase family.

It is found in the cytoplasm. The catalysed reaction is (R)-pantothenate + ATP = (R)-4'-phosphopantothenate + ADP + H(+). The protein operates within cofactor biosynthesis; coenzyme A biosynthesis; CoA from (R)-pantothenate: step 1/5. This chain is Pantothenate kinase, found in Haemophilus ducreyi (strain 35000HP / ATCC 700724).